A 73-amino-acid chain; its full sequence is Antimicrobial peptide TsAP-2 (73 aa).

The N-terminal stretch at 1-22 is a signal peptide; it reads MQIKHLITIFFLVLIVADHCHA. Lys-39 is modified (lysine amide). The propeptide occupies 45 to 73; it reads EITSQIEQYRNLQKREAELENLLANLPVY.

This sequence belongs to the non-disulfide-bridged peptide (NDBP) superfamily. Short antimicrobial peptide (group 4) family. As to expression, expressed by the venom gland.

Its subcellular location is the secreted. In terms of biological role, antimicrobial peptide. Has a high antibacterial activity against the Gram-positive bacterium S.aureus (MIC=5-17.30 uM), the methicillin-resistant S.aureus (MRSA) (MIC=17.30 uM), and E.faecalis (MIC=69.23 uM). Has antifungal activity against Candida spp. and one Cryptococcus neoformans strains with MICs values ranging from 6.25 to 100 uM. Also shows an inhibitory activity on C.albicans biofilms at high concentrations. Has a moderate hemolytic potency (18% at 20 uM). Also inhibits the growth of the five human cancer cell lines tested (the squamous carcinoma cell line H157 (IC(50)=4.1 uM), the lung adenocarcinoma cell line H838 (11.0 uM), the breast carcinoma cell line MCF-7 (6.4 uM), the androgen-independent prostate adenocarcinoma cell line PC3 (13.3 uM) and the glioblastoma cell line U251-MG (15.4 uM)). In the model of polymicrobial sepsis, it exhibits an antibiotic effect, reducing the levels of microorganisms in the infectious focus and the inflammatory responses in the lung and cecum of septic animals. This chain is Antimicrobial peptide TsAP-2, found in Tityus serrulatus (Brazilian scorpion).